The primary structure comprises 666 residues: MQHVNHSSFDKASKAGFIIALGIVYGDIGTSPLYTMQSLVENQGGISSVTESFILGSISLIIWTLTLITTIKYVLVALKADNHHEGGIFSLYTLVRKMTPWLIVPAVIGGATLLSDGALTPAVTVTSAVEGLKVVPSLQHIFQNQSNVIFATLFILLLLFAIQRFGTGVIGKLFGPIMFIWFAFLGISGLLNSFAHPEVFKAINPYYGLKLLFSPENHKGIFILGSIFLATTGAEALYSDLGHVGRGNIHVSWPFVKVAIILSYCGQGAWILANKNAGNELNPFFASIPSQFTMHVVILATLAAIIASQALISGSFTLVSEAMRLKIFPQFRSTYPGDNIGQTYIPVINWFLFAITTSIVLLFKTSAHMEAAYGLAITITMLMTTILLSFFLIQKGVKRGLVLLMMIFFGILEGIFFLASAVKFMHGGYVVVIIAVAIIFIMTIWYKGSKIVSRYVKLLDLKDYIGQLDKLRHDHRYPIYHTNVVYLTNRMEEDMIDKSIMYSILDKRPKKAQVYWFVNIKVTDEPYTAEYKVDMMGTDFIVKVELYLGFKMRQTVSRYLRTIVEELLESGRLPKQGKTYSVRPDSNVGDFRFIVLDERFSSSQNLKPGERFVMLMKSSIKHWTATPIRWFGLQFSEVTTEVVPLIFTANRGLPIKEKSELTTTGD.

12 consecutive transmembrane segments (helical) span residues 16–36 (GFIIALGIVYGDIGTSPLYTM), 58–78 (ISLIIWTLTLITTIKYVLVAL), 99–119 (TPWLIVPAVIGGATLLSDGAL), 141–161 (IFQNQSNVIFATLFILLLLFA), 167–187 (TGVIGKLFGPIMFIWFAFLGI), 221–241 (IFILGSIFLATTGAEALYSDL), 253–273 (WPFVKVAIILSYCGQGAWILA), 292–312 (FTMHVVILATLAAIIASQALI), 343–363 (TYIPVINWFLFAITTSIVLLF), 373–393 (YGLAITITMLMTTILLSFFLI), 402–422 (VLLMMIFFGILEGIFFLASAV), and 424–444 (FMHGGYVVVIIAVAIIFIMTI).

This sequence belongs to the HAK/KUP transporter (TC 2.A.72) family.

Its subcellular location is the cell membrane. It carries out the reaction K(+)(in) + H(+)(in) = K(+)(out) + H(+)(out). Functionally, transport of potassium into the cell. Likely operates as a K(+):H(+) symporter. This Streptococcus agalactiae serotype V (strain ATCC BAA-611 / 2603 V/R) protein is Probable potassium transport system protein Kup.